Here is a 201-residue protein sequence, read N- to C-terminus: Ribosome maturation factor RimP (201 aa).

The protein belongs to the RimP family.

It localises to the cytoplasm. Functionally, required for maturation of 30S ribosomal subunits. The polypeptide is Ribosome maturation factor RimP (Acidobacterium capsulatum (strain ATCC 51196 / DSM 11244 / BCRC 80197 / JCM 7670 / NBRC 15755 / NCIMB 13165 / 161)).